A 183-amino-acid polypeptide reads, in one-letter code: Protein US32 (183 aa).

Belongs to the herpesviridae US1 family.

The chain is Protein US32 (US32) from Homo sapiens (Human).